The following is a 120-amino-acid chain: NAD(P)H-quinone oxidoreductase subunit 3, chloroplastic (120 aa).

3 consecutive transmembrane segments (helical) span residues 10–30 (FWAF…ISGV), 64–84 (MFAL…PWAM), and 88–108 (VLGV…IGGL).

This sequence belongs to the complex I subunit 3 family. NDH is composed of at least 16 different subunits, 5 of which are encoded in the nucleus.

It is found in the plastid. The protein resides in the chloroplast thylakoid membrane. It catalyses the reaction a plastoquinone + NADH + (n+1) H(+)(in) = a plastoquinol + NAD(+) + n H(+)(out). The enzyme catalyses a plastoquinone + NADPH + (n+1) H(+)(in) = a plastoquinol + NADP(+) + n H(+)(out). Functionally, NDH shuttles electrons from NAD(P)H:plastoquinone, via FMN and iron-sulfur (Fe-S) centers, to quinones in the photosynthetic chain and possibly in a chloroplast respiratory chain. The immediate electron acceptor for the enzyme in this species is believed to be plastoquinone. Couples the redox reaction to proton translocation, and thus conserves the redox energy in a proton gradient. The protein is NAD(P)H-quinone oxidoreductase subunit 3, chloroplastic of Ipomoea purpurea (Common morning glory).